Consider the following 297-residue polypeptide: tRNA pseudouridine synthase B (297 aa).

Residue Asp-44 is the Nucleophile of the active site.

This sequence belongs to the pseudouridine synthase TruB family. Type 1 subfamily.

The enzyme catalyses uridine(55) in tRNA = pseudouridine(55) in tRNA. Functionally, responsible for synthesis of pseudouridine from uracil-55 in the psi GC loop of transfer RNAs. The chain is tRNA pseudouridine synthase B from Corynebacterium glutamicum (strain R).